A 160-amino-acid polypeptide reads, in one-letter code: SsrA-binding protein (160 aa).

Belongs to the SmpB family.

It is found in the cytoplasm. Required for rescue of stalled ribosomes mediated by trans-translation. Binds to transfer-messenger RNA (tmRNA), required for stable association of tmRNA with ribosomes. tmRNA and SmpB together mimic tRNA shape, replacing the anticodon stem-loop with SmpB. tmRNA is encoded by the ssrA gene; the 2 termini fold to resemble tRNA(Ala) and it encodes a 'tag peptide', a short internal open reading frame. During trans-translation Ala-aminoacylated tmRNA acts like a tRNA, entering the A-site of stalled ribosomes, displacing the stalled mRNA. The ribosome then switches to translate the ORF on the tmRNA; the nascent peptide is terminated with the 'tag peptide' encoded by the tmRNA and targeted for degradation. The ribosome is freed to recommence translation, which seems to be the essential function of trans-translation. This Yersinia enterocolitica serotype O:8 / biotype 1B (strain NCTC 13174 / 8081) protein is SsrA-binding protein.